Here is a 331-residue protein sequence, read N- to C-terminus: Ornithine carbamoyltransferase (331 aa).

Carbamoyl phosphate contacts are provided by residues 57–60, Q82, R106, and 133–136; these read STRT and HPTQ. Residues N166, D230, and 234–235 each bind L-ornithine; that span reads SM. Residues 272-273 and R317 contribute to the carbamoyl phosphate site; that span reads CL.

This sequence belongs to the aspartate/ornithine carbamoyltransferase superfamily. OTCase family.

It is found in the cytoplasm. The enzyme catalyses carbamoyl phosphate + L-ornithine = L-citrulline + phosphate + H(+). It functions in the pathway amino-acid degradation; L-arginine degradation via ADI pathway; carbamoyl phosphate from L-arginine: step 2/2. Its function is as follows. Reversibly catalyzes the transfer of the carbamoyl group from carbamoyl phosphate (CP) to the N(epsilon) atom of ornithine (ORN) to produce L-citrulline. The chain is Ornithine carbamoyltransferase from Clostridium perfringens (strain SM101 / Type A).